The following is a 214-amino-acid chain: Adenylate kinase (214 aa).

10–15 (GAGKGT) is an ATP binding site. Positions 30 to 59 (STGDMLRAAIKAGSELGNKAKAVMDAGQLV) are NMP. AMP contacts are provided by residues Thr31, Arg36, 57 to 59 (QLV), 85 to 88 (GFPR), and Gln92. The LID stretch occupies residues 122 to 159 (GRRVHSGSGRVYHLVYNPPKVEGKDDVSGDDLSIRPDD). ATP-binding positions include Arg123 and 132–133 (VY). The AMP site is built by Arg156 and Arg167. Gln200 contacts ATP.

This sequence belongs to the adenylate kinase family. Monomer.

The protein resides in the cytoplasm. It carries out the reaction AMP + ATP = 2 ADP. It functions in the pathway purine metabolism; AMP biosynthesis via salvage pathway; AMP from ADP: step 1/1. Functionally, catalyzes the reversible transfer of the terminal phosphate group between ATP and AMP. Plays an important role in cellular energy homeostasis and in adenine nucleotide metabolism. This is Adenylate kinase from Colwellia psychrerythraea (strain 34H / ATCC BAA-681) (Vibrio psychroerythus).